Consider the following 448-residue polypeptide: Carbon catabolite repressor protein 4 homolog 3 (448 aa).

Residues 50-67 show a composition bias toward low complexity; that stretch reads SSTSGPSDSNPESSSNRS. The tract at residues 50–92 is disordered; that stretch reads SSTSGPSDSNPESSSNRSYSRRWQNPLPRRQHPDQIPSSQIAR. Residue Glu-162 participates in Mg(2+) binding.

This sequence belongs to the CCR4/nocturin family. As to quaternary structure, component of the CCR4-NOT complex, at least composed of CRR4 and CAF1 proteins. Mg(2+) serves as cofactor.

The protein localises to the nucleus. It localises to the cytoplasm. The catalysed reaction is Exonucleolytic cleavage of poly(A) to 5'-AMP.. In terms of biological role, acts as a catalytic component of the CCR4-NOT core complex, which in the nucleus seems to be a general transcription factor, and in the cytoplasm the major mRNA deadenylase involved in mRNA turnover. The protein is Carbon catabolite repressor protein 4 homolog 3 (CCR4-3) of Arabidopsis thaliana (Mouse-ear cress).